The chain runs to 278 residues: 4-deoxy-L-threo-5-hexosulose-uronate ketol-isomerase (278 aa).

Zn(2+)-binding residues include H196, H198, E203, and H245.

It belongs to the KduI family. It depends on Zn(2+) as a cofactor.

The catalysed reaction is 5-dehydro-4-deoxy-D-glucuronate = 3-deoxy-D-glycero-2,5-hexodiulosonate. The protein operates within glycan metabolism; pectin degradation; 2-dehydro-3-deoxy-D-gluconate from pectin: step 4/5. Functionally, catalyzes the isomerization of 5-dehydro-4-deoxy-D-glucuronate to 3-deoxy-D-glycero-2,5-hexodiulosonate. The sequence is that of 4-deoxy-L-threo-5-hexosulose-uronate ketol-isomerase from Yersinia enterocolitica serotype O:8 / biotype 1B (strain NCTC 13174 / 8081).